A 492-amino-acid polypeptide reads, in one-letter code: MPTNGLHQVLKIQFGLVNDADRYLTAESFGFKVNASAASLKRKQIWVLEPDPGQGTAVLFRSSHLGRYLSAEEDGRVACEMDQPGRDCRFLVLPQPDGRWVLQSEPHGRFFGGIEDRLSCFATAISPAELWTVHLAIHPQAHLLSVSRRRYVHLCLQEDEMAADGDMPWGVDALVTLIFQSRRYCLKSYDSRYLRSDGRLVWEPEAHACYTLEFKAGKLAFKDCDGRYLAPVGPAGTLKAGRNTRPSKDELFDLEQSHPQVVLVAANRRYISVRQGINVSANQDEELGHETFLMQIDQETKKCTFYSSTGGYWTLVTHGGIQATATQVSANTMFEIEWHGRRVALKASNGRFVCMKKNGQLAAISDFVGEDELFTLKLINRPLLVLRGLDGFVCHRRGSNQLDTNRSTYDVFHLSFRDGAYQIRGRGGGFWYTGSHGSVCSDGDLAEDFLFEFRERGRLAIRALSGKYLRGGASGLLRADADLPVGEALWEY.

Belongs to the fascin family. Expressed in the inner ear. Abundant in the utricle.

The protein resides in the cytoplasm. The protein localises to the cytoskeleton. It is found in the cell projection. Its subcellular location is the stereocilium. Acts as an actin bundling protein. May play a pivotal role in photoreceptor cell-specific events, such as disk morphogenesis. Important for maintaining functional hair-cell bundles in the inner ear. May stiffen the longer stereocilia of hair-cell bundles in the inner ear enabling better force transmission to tip links. This is Fascin-2 (Fscn2) from Mus musculus (Mouse).